Reading from the N-terminus, the 161-residue chain is Small ribosomal subunit protein uS9 (161 aa).

The protein belongs to the universal ribosomal protein uS9 family.

The chain is Small ribosomal subunit protein uS9 from Rickettsia felis (strain ATCC VR-1525 / URRWXCal2) (Rickettsia azadi).